A 250-amino-acid chain; its full sequence is Triosephosphate isomerase (250 aa).

9 to 11 contacts substrate; sequence NWK. The active-site Electrophile is the histidine 100. Glutamate 169 functions as the Proton acceptor in the catalytic mechanism. Substrate contacts are provided by residues glycine 175, serine 208, and 229-230; that span reads GG.

It belongs to the triosephosphate isomerase family. As to quaternary structure, homodimer.

It localises to the cytoplasm. The enzyme catalyses D-glyceraldehyde 3-phosphate = dihydroxyacetone phosphate. It participates in carbohydrate biosynthesis; gluconeogenesis. The protein operates within carbohydrate degradation; glycolysis; D-glyceraldehyde 3-phosphate from glycerone phosphate: step 1/1. In terms of biological role, involved in the gluconeogenesis. Catalyzes stereospecifically the conversion of dihydroxyacetone phosphate (DHAP) to D-glyceraldehyde-3-phosphate (G3P). In Synechococcus sp. (strain JA-2-3B'a(2-13)) (Cyanobacteria bacterium Yellowstone B-Prime), this protein is Triosephosphate isomerase.